The chain runs to 565 residues: Urocanate hydratase (565 aa).

NAD(+)-binding positions include 58 to 59, Gln136, 182 to 184, Glu202, Arg207, 245 to 246, 266 to 270, 276 to 277, and Tyr325; these read GG, GMG, NA, QTSAH, and YL. Cys413 is an active-site residue. NAD(+) is bound at residue Gly495.

It belongs to the urocanase family. Requires NAD(+) as cofactor.

The protein localises to the cytoplasm. The enzyme catalyses 4-imidazolone-5-propanoate = trans-urocanate + H2O. The protein operates within amino-acid degradation; L-histidine degradation into L-glutamate; N-formimidoyl-L-glutamate from L-histidine: step 2/3. Its function is as follows. Catalyzes the conversion of urocanate to 4-imidazolone-5-propionate. This is Urocanate hydratase from Vibrio vulnificus (strain CMCP6).